Consider the following 406-residue polypeptide: uncharacterized protein (406 aa).

This is an uncharacterized protein from Escherichia coli (strain K12).